The primary structure comprises 191 residues: TATA-box-binding protein (191 aa).

2 tandem repeats follow at residues 11–87 and 102–178.

Belongs to the TBP family.

Its function is as follows. General factor that plays a role in the activation of archaeal genes transcribed by RNA polymerase. Binds specifically to the TATA box promoter element which lies close to the position of transcription initiation. The sequence is that of TATA-box-binding protein (tbp) from Pyrococcus furiosus (strain ATCC 43587 / DSM 3638 / JCM 8422 / Vc1).